The following is a 146-amino-acid chain: MSYCKIEAPYPEAEAGEKRIIFALDPKGDEVEQEQCMLQLIPGRVLEMSRNDAANHQTLGGSIEQHTVEGFGAKFFHVKLAKQAVSTLMYVHAEDHGEKVRKFVAMSNAPMFPYRSRYPVVVYLPKDAELRYGIWCGGQQMQAATE.

This sequence belongs to the protease inhibitor I11 (ecotin) family.

This chain is Ecotin-like protein 1 (ISP1), found in Leishmania major.